The sequence spans 140 residues: ISDra2 transposase TnpA (140 aa).

Positions 67 and 69 each coordinate Mg(2+). The segment at 127–133 (AQIQKYI) is mobile alpha helix. Tyrosine 132 (nucleophile) is an active-site residue. Glutamine 136 contacts Mg(2+).

The protein belongs to the transposase 17 family. Homodimer. Mg(2+) is required as a cofactor.

Its activity is regulated as follows. Both the excision and insertion steps are inhibited by TnpB. A transposase that is part of insertion sequence (IS) element ISDra2, it is necessary and sufficient for both transposon excision and insertion of ISDra2. This protein alone can be provided in trans and allows transposition of an empty IS element (tnpA or tnpA-tnpB replaced by a selectable marker). ISDra2 binds subterminal imperfect palindromes at the left (LE) and right (RE) ends of the element and cleaves only the 'top strand' which is circularized and subsequently reinserted into the DNA target. This is called a 'peel and paste' mechanism and increases the copy number of the IS. Transposition is linked to DNA replication in the absence of irradiation, with maximal activity when the 'top strand' is on the replication lagging strand, and occurs preferentially on the lagging strand. The IS element inserts 3' of the target sequence 5'-TTGAT-3'; target duplication has not been observed. The sequence is that of ISDra2 transposase TnpA from Deinococcus radiodurans (strain ATCC 13939 / DSM 20539 / JCM 16871 / CCUG 27074 / LMG 4051 / NBRC 15346 / NCIMB 9279 / VKM B-1422 / R1).